The primary structure comprises 134 residues: Replication enhancer protein (134 aa).

The protein belongs to the geminiviridae replication enhancer protein family. In terms of assembly, homooligomer. Interacts with the replication-associated protein (REP). Interacts with host proliferating cell nuclear antigen (PCNA). Interacts with host retinoblastoma-related protein 1 (RBR1), and may thereby deregulate the host cell cycle. Oligomerization and interaction with PCNA are necessary for optimal replication enhancement.

Increases viral DNA accumulation. Enhances infectivity and symptom expression. The protein is Replication enhancer protein of Nicotiana tabacum (Common tobacco).